Here is a 239-residue protein sequence, read N- to C-terminus: MIELIPAIDIIDGKCVRLSQGDYGSKKVYNENPVEVAKEFEANGIRRLHVVDLDGAASHHVVNYRTLDLISSRTSLIIDFGGGLKSDEDLIIAFENGAQMVTGGSIAVRNPDLFCRWIDRYGSGKIILGADVKDRRIAVNGWKDESTCELFPFLKDYTQKGIEKVICTDISCDGMLAGPSLDLYKEILAEHPTLYLIASGGVSSIADIEALHEAGVPAVIFGKALYEGRITLKELQAFL.

Asp-9 acts as the Proton acceptor in catalysis. Residue Asp-131 is the Proton donor of the active site.

It belongs to the HisA/HisF family.

The protein resides in the cytoplasm. It catalyses the reaction 1-(5-phospho-beta-D-ribosyl)-5-[(5-phospho-beta-D-ribosylamino)methylideneamino]imidazole-4-carboxamide = 5-[(5-phospho-1-deoxy-D-ribulos-1-ylimino)methylamino]-1-(5-phospho-beta-D-ribosyl)imidazole-4-carboxamide. Its pathway is amino-acid biosynthesis; L-histidine biosynthesis; L-histidine from 5-phospho-alpha-D-ribose 1-diphosphate: step 4/9. The polypeptide is 1-(5-phosphoribosyl)-5-[(5-phosphoribosylamino)methylideneamino] imidazole-4-carboxamide isomerase (Bacteroides fragilis (strain ATCC 25285 / DSM 2151 / CCUG 4856 / JCM 11019 / LMG 10263 / NCTC 9343 / Onslow / VPI 2553 / EN-2)).